We begin with the raw amino-acid sequence, 272 residues long: Flagellin (272 aa).

The protein belongs to the bacterial flagellin family.

It localises to the secreted. The protein resides in the bacterial flagellum. Flagellin is the subunit protein which polymerizes to form the filaments of bacterial flagella. The polypeptide is Flagellin (hag) (Halalkalibacterium halodurans (strain ATCC BAA-125 / DSM 18197 / FERM 7344 / JCM 9153 / C-125) (Bacillus halodurans)).